A 2432-amino-acid chain; its full sequence is MSFNLNNALDDKITVVRGIPGDIVIFGIDGTIADSGVPVSIGSGQAKQPTAVPGDLAVFGSGVNQGQTIDSGLTVDDSSVSLPTVLWSSQKIESLIPTGSFLPLAGGTMTGTIISKDIVVPSGNVITLTDLPTVGTSAANKTYVDSKVSPGGPFLPLTGGTMSGDIVIQTGDIISIADLPITANSAANKAYVDSQISSGVPNATPTVLGKIQLAGDFDVTSTATVPVIKSATTSLEGKIQLAGDFDSSSTASIPIIKSATTLIEGKIQLAGDLTGTATSPLVAPGSITISKMAPLSASSKLIGSSSSTTVAEIGVGGSLEISSGILQENIPSLSNIFLPLSGGTMAGNIIVPTGDYITITDPPTVGTGAANKAYVDANITPNATPTVLGKIQLSGDISGTAIAPVVSPGAITLSKMANLNAVSNLIGSSNTNVTPTNISLGSNLQMTGTTLNVNLTSLSGSFLSLLGGTMSGNIIIPSGDLISIADAPVSGTSAANKSYVDSQIIVNATPNATSTVLGKIQLTGDLLGSSATFPTVAPGAITLSKLANLSSPSKLIGSGSTSSSPANITLGTSLSMSGTSLNVVPTFSNPTFNGTISGTAVLGVSNGGTGNSTLTGYVVGNGTAPFTAVTSIPVSNVNGAVQSVNGVFPDLSGNVTVTLGTVTTGTLAALPPVGPPLVNGDIYVVSGDPTPSNNGLTFIYSTTPTNQWLEISPSFGSLDARYLQLSGGTMSGNIVIPSGNFITLTSLPVNPTDAANKSYVDVNITPSATTSLQGKVQLSGDLSGVASAPVITTGAITLTKMANLTSTSSLIGSSSTSTSPSQLSLGSNLQISGTTLDVNTSSLSGTFLPLTGGTMSGNIVIPTGDLISITDAPTIGTSAANKAYVDANITPNATSTVLGKIQLAGDLLGSSATLPTISAGAVTLSKMANLSTTMSLIGSSSTSNLVSQLSLGSNLQISGTTLDVNTSSLSGTFLPLAGGTMSGNIVIPTGDLISIADAPTVGTSAANKAYVDANITPNATTTVLGKIQLSGDFDSTSTATVPVIKSATSSIQGKIQLSGDLTGSSTSPTIAAGAITLVKMANLSGNSQIIGSSSTASTPTNLTLGSGLQISGTVLSVNSATLTVPPATATTIGGIEMLGDLTGSVATAPTVATGAITLAKMANLSGNSQIIGSSSTTSTPTNLTLGSGLQISGTVLSVNSATLTVPPATSTSLGGIEMLGDLTGSVATAPTVAAGAITLAKMANLSGNSQIIGSSSTASTPVNLTLGNFLQMTGTVLNVNSSSLSGTFLPLSGGTMSGNIVIPTGDLISIADAPTVGTSAANKAYVDAQIISATPNATTTTLGKIQLSGDFDSTSTATVPIIKSATSSIQGKIQLSGDLTGSSISPTVAAGAITLAKMANLSGNSQIIGSSSTTSSPTNLTLGSGLQISGTVLSVNSATLTVPPATATTIGGIEMLGDLTGSVATAPTVAAGAITLAKMANLSGSSQIIGSSSTTSAPTNLTLGSGLQITSTVLSISAATSSTLGGIEMLGDLTGSVATAPTVAAGAITLAKMANLSGNSQIIGSSSTASTPTNLTLGSGLQISGTVLSVNSATLTVPPATATTIGGIEMLGDLTGSVATAPTVAAGAITLAKMANLSGNSQIIGSSSTASTPTNLTLGSGLQISGTVLSVNSATLTVPPATATTIGGIEMLGDLTGSVATAPTVAAGAITLAKMANLSGNSQIIGSSSTASTPTNLTLGSGLQISGTVLSINSATLTVPPATATTIGGIEMLGDLTGSVATAPTVAAGAITLAKMANLSGNSQIIGSSSTASTPTNLTLGSGLQISGTILNVNTTSLSSTFLPLAGGTMSGNIIIPTGDLISIADAPLVGTSGANKSYVDSQIIANATPSATTGIQGKIQLAGDLGGSGTTASSPVISSGAITLTKMANLSGNSQIIGSGSTSSSPVNLTLGSGLQISGTVLSVNSATLTVPPATATTIGGIEMLGDLTGSVATAPTIAAGAITLAKMANLSGNSQIIGSSSTTSTPTNLTLGSGLQISGTVLSVNSATLTVPPATATTIGGIEMLGDLTGSVATAPTVATGAITLSKMANLSGNSQIIGSSSTTSTPTNLTLGSGLQISGTVLSVNSATLTVPPATATTIGGIEMLGDLTGSVATAPTVAAGAITLAKMANLSGTSQLIGSSSTTTSPANISLGSTLQMSGTTLSVNTSTLMLLVPSSVNGDLATLNASGQVIDSGVSINNSGLTSASLWNAAKLAITTNSWFAGTNPNTTAPTDRPATSSVLYVGTDASLWIWNGSVYISLIGAKVPTSVTRTFTTSTGASGFQISTINGAFVHYSVSISTTIGVGGTSTGTVNLEVSPTNSATPASWIVNGVISNSQSFAGLITLSSVQVQGGQLCTYVPAGYFVKLRTTSSGTTSFSYVAGIEVLDN.

It belongs to the IIV-6 261R/396L/443R family.

This is an uncharacterized protein from Invertebrate iridescent virus 6 (IIV-6).